The sequence spans 439 residues: Xylose isomerase (439 aa).

Residues His98 and Asp101 contribute to the active site. Residues Glu229, Glu265, His268, Asp293, Asp304, Asp306, and Asp335 each coordinate Mg(2+).

It belongs to the xylose isomerase family. In terms of assembly, homotetramer. The cofactor is Mg(2+).

The protein localises to the cytoplasm. The catalysed reaction is alpha-D-xylose = alpha-D-xylulofuranose. Involved in D-xylose catabolism. In Staphylococcus xylosus, this protein is Xylose isomerase (xylA).